The sequence spans 326 residues: Flap endonuclease 1 (326 aa).

An N-domain region spans residues 1-100 (MGNAALRQLA…EEVQERRVAR (100 aa)). Mg(2+)-binding residues include D28, D82, E154, E156, D175, D177, and D225. The interval 118–246 (AASRLEARTQ…TAISAINDHG (129 aa)) is I-domain. The segment at 318–326 (VQTGLDEWI) is interaction with PCNA.

It belongs to the XPG/RAD2 endonuclease family. FEN1 subfamily. Interacts with PCNA. PCNA stimulates the nuclease activity without altering cleavage specificity. Mg(2+) is required as a cofactor.

Its function is as follows. Structure-specific nuclease with 5'-flap endonuclease and 5'-3' exonuclease activities involved in DNA replication and repair. During DNA replication, cleaves the 5'-overhanging flap structure that is generated by displacement synthesis when DNA polymerase encounters the 5'-end of a downstream Okazaki fragment. Binds the unpaired 3'-DNA end and kinks the DNA to facilitate 5' cleavage specificity. Cleaves one nucleotide into the double-stranded DNA from the junction in flap DNA, leaving a nick for ligation. Also involved in the base excision repair (BER) pathway. Acts as a genome stabilization factor that prevents flaps from equilibrating into structures that lead to duplications and deletions. Also possesses 5'-3' exonuclease activity on nicked or gapped double-stranded DNA. This is Flap endonuclease 1 from Haloquadratum walsbyi (strain DSM 16790 / HBSQ001).